The chain runs to 403 residues: uncharacterized protein (403 aa).

The next 2 helical transmembrane spans lie at 29–49 and 55–75; these read FVIF…CGFL and AFIA…FFGC.

It belongs to the chlamydial CPn_0129/CT_036/TC_0306 family.

The protein resides in the cell membrane. This is an uncharacterized protein from Chlamydia trachomatis serovar D (strain ATCC VR-885 / DSM 19411 / UW-3/Cx).